Reading from the N-terminus, the 998-residue chain is Bifunctional glutamine synthetase adenylyltransferase/adenylyl-removing enzyme (998 aa).

Residues 1–487 (MVVTKPATQR…LHAKLFYQPL (487 aa)) are adenylyl removase. The interval 492–998 (GPAGLEIRHG…KAVVRKVFGS (507 aa)) is adenylyl transferase.

It belongs to the GlnE family. It depends on Mg(2+) as a cofactor.

The catalysed reaction is [glutamine synthetase]-O(4)-(5'-adenylyl)-L-tyrosine + phosphate = [glutamine synthetase]-L-tyrosine + ADP. It catalyses the reaction [glutamine synthetase]-L-tyrosine + ATP = [glutamine synthetase]-O(4)-(5'-adenylyl)-L-tyrosine + diphosphate. Functionally, involved in the regulation of glutamine synthetase GlnA, a key enzyme in the process to assimilate ammonia. When cellular nitrogen levels are high, the C-terminal adenylyl transferase (AT) inactivates GlnA by covalent transfer of an adenylyl group from ATP to specific tyrosine residue of GlnA, thus reducing its activity. Conversely, when nitrogen levels are low, the N-terminal adenylyl removase (AR) activates GlnA by removing the adenylyl group by phosphorolysis, increasing its activity. The regulatory region of GlnE binds the signal transduction protein PII (GlnB) which indicates the nitrogen status of the cell. The protein is Bifunctional glutamine synthetase adenylyltransferase/adenylyl-removing enzyme of Mycobacterium avium (strain 104).